The chain runs to 575 residues: Proline--tRNA ligase (575 aa).

This sequence belongs to the class-II aminoacyl-tRNA synthetase family. ProS type 1 subfamily. Homodimer.

It is found in the cytoplasm. The enzyme catalyses tRNA(Pro) + L-proline + ATP = L-prolyl-tRNA(Pro) + AMP + diphosphate. Its function is as follows. Catalyzes the attachment of proline to tRNA(Pro) in a two-step reaction: proline is first activated by ATP to form Pro-AMP and then transferred to the acceptor end of tRNA(Pro). As ProRS can inadvertently accommodate and process non-cognate amino acids such as alanine and cysteine, to avoid such errors it has two additional distinct editing activities against alanine. One activity is designated as 'pretransfer' editing and involves the tRNA(Pro)-independent hydrolysis of activated Ala-AMP. The other activity is designated 'posttransfer' editing and involves deacylation of mischarged Ala-tRNA(Pro). The misacylated Cys-tRNA(Pro) is not edited by ProRS. This chain is Proline--tRNA ligase, found in Solidesulfovibrio magneticus (strain ATCC 700980 / DSM 13731 / RS-1) (Desulfovibrio magneticus).